Reading from the N-terminus, the 448-residue chain is MAKHPFEQFNLESSLIDAVKDLNFEKPTEIQNRIIPRILKRTNLIGQSQTGTGKSHAFLLPLMQLIDSEIKEPQAIVVAPTRELAQQLYDAANHLSQFKAGVSVKVFIGGTDIEKDRQRCNAQPQLIIGTPTRINDLAKTGHLHVHLASYLVIDEADLMIDLGLIEDVDYIAARLEDNANIAVFSATIPQQLQPFLNKYLSHPEYVAVDSKKQNKKNIEFYLIPTKGAAKVEKTLNLIDILNPYLCIIFCNSRDNANDLARSLNEAGIKVGMIHGGLTPRERKQQMKRIRNLEFQYVIASDLASRGIDIEGVSHVINFDVPNDIDFFTHRVGRTGRGNYKGVAITLYSPDEEHNISLIEDRGFVFNTVDIKDGELKEVKAHNQRQARMRKDDHLTNQVKNKVRSKIKNKVKPGYKKKFKQEVEKMKRQERKQFSKQQNRQKRKQNKKG.

Positions 4 to 32 (HPFEQFNLESSLIDAVKDLNFEKPTEIQN) match the Q motif motif. Residues 35-206 (IPRILKRTNL…NKYLSHPEYV (172 aa)) enclose the Helicase ATP-binding domain. Residue 48–55 (SQTGTGKS) coordinates ATP. Residues 154–157 (DEAD) carry the DEAD box motif. Positions 236–386 (NLIDILNPYL…EVKAHNQRQA (151 aa)) constitute a Helicase C-terminal domain. Residues 400–418 (NKVRSKIKNKVKPGYKKKF) show a composition bias toward basic residues. The tract at residues 400–448 (NKVRSKIKNKVKPGYKKKFKQEVEKMKRQERKQFSKQQNRQKRKQNKKG) is disordered. Over residues 419–432 (KQEVEKMKRQERKQ) the composition is skewed to basic and acidic residues. The span at 438-448 (NRQKRKQNKKG) shows a compositional bias: basic residues.

This sequence belongs to the DEAD box helicase family. CshB subfamily.

The protein resides in the cytoplasm. It catalyses the reaction ATP + H2O = ADP + phosphate + H(+). Functionally, probable DEAD-box RNA helicase. May work in conjunction with the cold shock proteins to ensure proper initiation of transcription at low and optimal temperatures. This Staphylococcus aureus (strain NCTC 8325 / PS 47) protein is DEAD-box ATP-dependent RNA helicase CshB.